The primary structure comprises 528 residues: ATP synthase subunit alpha 1 (528 aa).

Position 177–184 (177–184 (GDRQTGKT)) interacts with ATP.

This sequence belongs to the ATPase alpha/beta chains family. As to quaternary structure, F-type ATPases have 2 components, CF(1) - the catalytic core - and CF(0) - the membrane proton channel. CF(1) has five subunits: alpha(3), beta(3), gamma(1), delta(1), epsilon(1). CF(0) has three main subunits: a(1), b(2) and c(9-12). The alpha and beta chains form an alternating ring which encloses part of the gamma chain. CF(1) is attached to CF(0) by a central stalk formed by the gamma and epsilon chains, while a peripheral stalk is formed by the delta and b chains.

The protein resides in the cell inner membrane. It catalyses the reaction ATP + H2O + 4 H(+)(in) = ADP + phosphate + 5 H(+)(out). In terms of biological role, produces ATP from ADP in the presence of a proton gradient across the membrane. The alpha chain is a regulatory subunit. The chain is ATP synthase subunit alpha 1 from Pseudoalteromonas atlantica (strain T6c / ATCC BAA-1087).